Here is a 138-residue protein sequence, read N- to C-terminus: Lymphocyte antigen 6L (138 aa).

Residues 1-16 (MERLVLTLCTLPLAVA) form the signal peptide. N27 carries N-linked (GlcNAc...) asparagine glycosylation. In terms of domain architecture, UPAR/Ly6 spans 28-122 (LSCYQCFKVS…TPQEGRWALR (95 aa)). 2 disulfide bridges follow: C30–C47 and C103–C108. G117 carries GPI-anchor amidated glycine lipidation. A propeptide spans 118-138 (RWALRGGLLLQVGLSLLRALL) (removed in mature form).

It is found in the cell membrane. The polypeptide is Lymphocyte antigen 6L (Homo sapiens (Human)).